Reading from the N-terminus, the 92-residue chain is Large ribosomal subunit protein bL31 (92 aa).

The disordered stretch occupies residues 66 to 92; sequence GMGSANPDVDAPAPKKAAKKSDAESDS. The segment covering 70–80 has biased composition (low complexity); the sequence is ANPDVDAPAPK.

The protein belongs to the bacterial ribosomal protein bL31 family. Type A subfamily. In terms of assembly, part of the 50S ribosomal subunit.

In terms of biological role, binds the 23S rRNA. The polypeptide is Large ribosomal subunit protein bL31 (Synechococcus sp. (strain RCC307)).